The primary structure comprises 975 residues: Lateral signaling target protein 2 homolog (975 aa).

Disordered stretches follow at residues 299–458 (PLGS…GTDE) and 504–523 (YGTAEQQGHQGLEEEEPSTS). 4 stretches are compositionally biased toward low complexity: residues 302–352 (SSSI…TTNT), 365–376 (NNHNSNSNSSSN), 383–400 (TLRSPSMLSLSTTSTPTA), and 408–429 (PSHSIASTSSAATSSTNPPADW). Acidic residues predominate over residues 430-458 (SDGDDEDEDDDDIDVDEEDPESSDDGTDE). Phosphoserine occurs at positions 540 and 541. Disordered stretches follow at residues 556-633 (EEHM…SSLS) and 740-891 (DNVF…SPPA). Positions 564–602 (GRHHRHHQSHHHHHHHRHSHQHQHRQPHPHRTTRSGRKR) are enriched in basic residues. The segment covering 621 to 633 (LASGDTSAASSLS) has biased composition (low complexity). Residues 751–770 (ATGQRHSAGASMQRNNTIDL) are compositionally biased toward polar residues. Residue S796 is modified to Phosphoserine. Low complexity-rich tracts occupy residues 802–860 (AASS…PVSA) and 877–890 (PSSATSTSATLSPP). The FYVE-type zinc-finger motif lies at 895–955 (DGKAPRCMAC…VCRDCYVREV (61 aa)). Zn(2+) contacts are provided by C901, C904, C917, C920, C925, C928, C947, and C950.

Belongs to the lst-2 family.

Negative regulator of epidermal growth factor receptor (EGFR) signaling. The protein is Lateral signaling target protein 2 homolog of Drosophila sechellia (Fruit fly).